The chain runs to 336 residues: CMP-sialic acid transporter (336 aa).

The Cytoplasmic portion of the chain corresponds to 1–9 (MAQARENVS). Residues 10–30 (LFFKLYCLAVMTLVAAAYTVA) form a helical membrane-spanning segment. Topologically, residues 31 to 45 (LRYTRTTAKELYFST) are lumenal. A helical transmembrane segment spans residues 46–64 (TAVCVTEVIKLLISVGLLA). K55 contributes to the CMP-N-acetyl-beta-neuraminate binding site. Residues 65–87 (KETGSLGRFKASLSENVLGSPKE) lie on the Cytoplasmic side of the membrane. A helical transmembrane segment spans residues 88–108 (LMKLSVPSLVYAVQNNMAFLA). 101-102 (QN) provides a ligand contact to CMP-N-acetyl-beta-neuraminate. At 109–114 (LSNLDA) the chain is on the lumenal side. The chain crosses the membrane as a helical span at residues 115-135 (AVYQVTYQLKIPCTALCTVLM). Residue 117–124 (YQVTYQLK) participates in CMP-N-acetyl-beta-neuraminate binding. The Cytoplasmic portion of the chain corresponds to 136 to 141 (LNRTLS). Residues 142-160 (KLQWVSVFMLCGGVILVQW) traverse the membrane as a helical segment. Residues 161-175 (KPAQATKVVVEQSPL) lie on the Lumenal side of the membrane. Residues 176–196 (LGFGAIAIAVLCSGFAGVYFE) form a helical membrane-spanning segment. S188 contributes to the CMP-N-acetyl-beta-neuraminate binding site. The Cytoplasmic segment spans residues 197 to 209 (KVLKSSDTSLWVR). Residue 210–214 (NIQMY) coordinates CMP-N-acetyl-beta-neuraminate. The helical transmembrane segment at 210–228 (NIQMYLSGIVVTLVGTYLS) threads the bilayer. Over 229-243 (DGAEIKEKGFFYGYT) the chain is Lumenal. A helical membrane pass occupies residues 244–262 (YYVWFVIFLASVGGLYTSV). Topologically, residues 263 to 269 (VVKYTDN) are cytoplasmic. A helical membrane pass occupies residues 270-288 (IMKGFSAAAAIVLSTIASV). K272 lines the CMP-N-acetyl-beta-neuraminate pocket. The Lumenal segment spans residues 289–296 (MLFGLQIT). Residues 297-315 (LSFAMGALLVCISIYLYGL) form a helical membrane-spanning segment. At 316 to 336 (PRQDTTCIQQEATSKERVIGV) the chain is on the cytoplasmic side. Positions 316–336 (PRQDTTCIQQEATSKERVIGV) are disordered.

It belongs to the nucleotide-sugar transporter family. SLC35A subfamily. As to quaternary structure, monomer.

The protein resides in the golgi apparatus membrane. The enzyme catalyses CMP-N-acetyl-beta-neuraminate(in) + CMP(out) = CMP-N-acetyl-beta-neuraminate(out) + CMP(in). The catalysed reaction is CMP-N-acetyl-beta-neuraminate(in) + AMP(out) = CMP-N-acetyl-beta-neuraminate(out) + AMP(in). It carries out the reaction CDP-L-ribitol(in) + CDP(out) = CDP-L-ribitol(out) + CDP(in). It catalyses the reaction UMP(out) + CMP-N-acetyl-beta-neuraminate(in) = UMP(in) + CMP-N-acetyl-beta-neuraminate(out). Its function is as follows. Transports CMP-sialic acid from the cytosol into the Golgi apparatus, functioning as an antiporter that exchanges CMP-sialic acid for CMP. Binds both CMP-sialic acid and free CMP, but has higher affinity for free CMP. Also able to exchange CMP-sialic acid for AMP and UMP. Also mediates the transport of CDP-ribitol. The polypeptide is CMP-sialic acid transporter (SLC35A1) (Cricetulus griseus (Chinese hamster)).